The sequence spans 185 residues: Elongation factor P (185 aa).

This sequence belongs to the elongation factor P family.

It localises to the cytoplasm. It functions in the pathway protein biosynthesis; polypeptide chain elongation. Its function is as follows. Involved in peptide bond synthesis. Stimulates efficient translation and peptide-bond synthesis on native or reconstituted 70S ribosomes in vitro. Probably functions indirectly by altering the affinity of the ribosome for aminoacyl-tRNA, thus increasing their reactivity as acceptors for peptidyl transferase. This Bacillus cereus (strain ATCC 10987 / NRS 248) protein is Elongation factor P.